The chain runs to 161 residues: Large ribosomal subunit protein bL9 (161 aa).

The protein belongs to the bacterial ribosomal protein bL9 family.

Binds to the 23S rRNA. The protein is Large ribosomal subunit protein bL9 of Blochmanniella floridana.